Here is a 268-residue protein sequence, read N- to C-terminus: Ubiquinone biosynthesis protein COQ4 homolog, mitochondrial (268 aa).

Residues His-171, Asp-172, His-175, and Glu-187 each contribute to the Zn(2+) site.

The protein belongs to the COQ4 family. As to quaternary structure, component of a multi-subunit COQ enzyme complex. Zn(2+) serves as cofactor.

The protein resides in the mitochondrion inner membrane. The catalysed reaction is a 4-hydroxy-3-methoxy-5-(all-trans-polyprenyl)benzoate + H(+) = a 2-methoxy-6-(all-trans-polyprenyl)phenol + CO2. It functions in the pathway cofactor biosynthesis; ubiquinone biosynthesis. Its function is as follows. Lyase that catalyzes the C1-decarboxylation of 4-hydroxy-3-methoxy-5-(all-trans-polyprenyl)benzoic acid into 2-methoxy-6-(all-trans-polyprenyl)phenol during ubiquinone biosynthesis. The polypeptide is Ubiquinone biosynthesis protein COQ4 homolog, mitochondrial (Drosophila melanogaster (Fruit fly)).